The following is a 305-amino-acid chain: Putative cuticle collagen 90 (305 aa).

Disordered stretches follow at residues 95-117 (AGPP…GDLG) and 146-305 (PPGQ…AKRH). Triple-helical region stretches follow at residues 96-125 (GPPG…SGIS), 142-204 (GPAG…PGTA), 208-252 (GAVG…NGRD), and 256-270 (GQPG…VGKD). A compositionally biased stretch (low complexity) spans 150 to 162 (QGPVGPQGFPGVV). Over residues 278-288 (ARRDSKTESVH) the composition is skewed to basic and acidic residues.

Belongs to the cuticular collagen family. In terms of assembly, collagen polypeptide chains are complexed within the cuticle by disulfide bonds and other types of covalent cross-links.

Nematode cuticles are composed largely of collagen-like proteins. The cuticle functions both as an exoskeleton and as a barrier to protect the worm from its environment. In Caenorhabditis elegans, this protein is Putative cuticle collagen 90 (col-90).